A 568-amino-acid chain; its full sequence is Zinc finger protein 648 (568 aa).

Residues 1–11 are compositionally biased toward basic and acidic residues; that stretch reads MAQVDSQDRWG. Positions 1 to 106 are disordered; sequence MAQVDSQDRW…MSGKASWSRD (106 aa). 10 consecutive C2H2-type zinc fingers follow at residues 279 to 301, 307 to 329, 335 to 358, 364 to 386, 392 to 414, 420 to 442, 448 to 470, 476 to 498, 504 to 526, and 532 to 554; these read YACE…RRLH, YQCS…IRTH, YPCP…RNMH, FPCS…QRTH, FRCP…QRVH, FPCP…QTLH, FKCA…QRIH, FPCT…QQIH, FLCA…IRMH, and YQCE…RAKH. The tract at residues 548 to 568 is disordered; it reads QRHRAKHGTCKKEPIPSSSDE.

Belongs to the krueppel C2H2-type zinc-finger protein family.

The protein localises to the nucleus. May be involved in transcriptional regulation. This is Zinc finger protein 648 (ZNF648) from Homo sapiens (Human).